Consider the following 474-residue polypeptide: MSHYHIVGIAGAGMSAIAHLLLDQGHTVSGSDLTTNRATEALAARGVRIWQGHDPAYVRGADAVLATAAIRGEHPELTAAAALGIPRLSRADLWREWSAQRPVIAVAGTHGKTTTSAMTALALRGGGVACGFLIGADVPALGGSAQWGDPTAPLVIEADEYDRVFLALTPAMAIVTNVEWDHPDIYPTATDYAAAFAEFAAQVRDRRRLLLCADDPGTAALDVDGQARWYGIDEQIACDPVSCRLAPLDWTASRVTVTAEGQQFDLWYYDRRTFARRFALMVTLAVPGIHNVRNATAALAAAALWGADLQAAGAALATYRGSSRRFEVYGEVAGVTVIDDYAHHPTEVQATIAAAQQRYPGRRVVVYVQPHTFSRTRSLWERWPEACRAAAIVSIGDVYPAREQGDPVALATELVAYLVAYGVVAHYGGGIATAAERLVALIQPGDVVLVLGAGDSNRVAAMVIAQLQRVQAEA.

Position 108–114 (108–114 (GTHGKTT)) interacts with ATP.

The protein belongs to the MurCDEF family.

Its subcellular location is the cytoplasm. The enzyme catalyses UDP-N-acetyl-alpha-D-muramate + L-alanine + ATP = UDP-N-acetyl-alpha-D-muramoyl-L-alanine + ADP + phosphate + H(+). Its pathway is cell wall biogenesis; peptidoglycan biosynthesis. In terms of biological role, cell wall formation. The chain is UDP-N-acetylmuramate--L-alanine ligase from Chloroflexus aggregans (strain MD-66 / DSM 9485).